The chain runs to 291 residues: Ribosome maturation factor RimP (291 aa).

The interval 188–291 (ERGLGEDEEF…GGKPKAKETH (104 aa)) is disordered. Residues 193–211 (EDEEFEDDADEVFEGDEAD) are compositionally biased toward acidic residues. Basic and acidic residues-rich tracts occupy residues 212 to 237 (EKAA…EKRA) and 245 to 254 (AKSEKAEKSQ).

It belongs to the RimP family.

The protein localises to the cytoplasm. In terms of biological role, required for maturation of 30S ribosomal subunits. In Azorhizobium caulinodans (strain ATCC 43989 / DSM 5975 / JCM 20966 / LMG 6465 / NBRC 14845 / NCIMB 13405 / ORS 571), this protein is Ribosome maturation factor RimP.